The chain runs to 159 residues: Ribosomal RNA large subunit methyltransferase H (159 aa).

Residues Gly108 and Phe127–Phe132 each bind S-adenosyl-L-methionine.

The protein belongs to the RNA methyltransferase RlmH family. As to quaternary structure, homodimer.

The protein localises to the cytoplasm. It catalyses the reaction pseudouridine(1915) in 23S rRNA + S-adenosyl-L-methionine = N(3)-methylpseudouridine(1915) in 23S rRNA + S-adenosyl-L-homocysteine + H(+). Specifically methylates the pseudouridine at position 1915 (m3Psi1915) in 23S rRNA. This Clostridium beijerinckii (strain ATCC 51743 / NCIMB 8052) (Clostridium acetobutylicum) protein is Ribosomal RNA large subunit methyltransferase H.